Consider the following 206-residue polypeptide: CASP-like protein 4B2 (206 aa).

2 stretches are compositionally biased toward low complexity: residues M1–A12 and S24–A36. Residues M1–G42 are disordered. Residues M1–K60 are Cytoplasmic-facing. The chain crosses the membrane as a helical span at residues S61–A81. At S82–Y99 the chain is on the extracellular side. A helical transmembrane segment spans residues L100 to L120. Over R121 to D138 the chain is Cytoplasmic. A helical transmembrane segment spans residues F139–I159. The Extracellular portion of the chain corresponds to T160–T174. Residues T175 to V195 traverse the membrane as a helical segment. Residues S196–M206 lie on the Cytoplasmic side of the membrane.

It belongs to the Casparian strip membrane proteins (CASP) family. As to quaternary structure, homodimer and heterodimers.

The protein localises to the cell membrane. In Oryza sativa subsp. japonica (Rice), this protein is CASP-like protein 4B2.